Here is a 155-residue protein sequence, read N- to C-terminus: Small ribosomal subunit protein uS7cz/uS7cy (155 aa).

The protein belongs to the universal ribosomal protein uS7 family. Part of the 30S ribosomal subunit.

Its subcellular location is the plastid. The protein resides in the chloroplast. Functionally, one of the primary rRNA binding proteins, it binds directly to 16S rRNA where it nucleates assembly of the head domain of the 30S subunit. This chain is Small ribosomal subunit protein uS7cz/uS7cy (rps7-A), found in Calycanthus floridus var. glaucus (Eastern sweetshrub).